Reading from the N-terminus, the 622-residue chain is DNA-directed RNA polymerase subunit gamma (622 aa).

Residues Cys-70, Cys-72, Cys-85, and Cys-88 each coordinate Zn(2+). Positions 466, 468, and 470 each coordinate Mg(2+).

It belongs to the RNA polymerase beta' chain family. RpoC1 subfamily. In terms of assembly, in cyanobacteria the RNAP catalytic core is composed of 2 alpha, 1 beta, 1 beta', 1 gamma and 1 omega subunit. When a sigma factor is associated with the core the holoenzyme is formed, which can initiate transcription. Requires Mg(2+) as cofactor. The cofactor is Zn(2+).

The catalysed reaction is RNA(n) + a ribonucleoside 5'-triphosphate = RNA(n+1) + diphosphate. Its function is as follows. DNA-dependent RNA polymerase catalyzes the transcription of DNA into RNA using the four ribonucleoside triphosphates as substrates. This Cyanothece sp. (strain PCC 7425 / ATCC 29141) protein is DNA-directed RNA polymerase subunit gamma.